Here is a 199-residue protein sequence, read N- to C-terminus: Recombination protein RecR (199 aa).

Residues 56–71 form a C4-type zinc finger; the sequence is CSICFNWSAEDPCEIC. Positions 79–174 constitute a Toprim domain; sequence SLWCVVADVK…TLRMTRLAFG (96 aa).

This sequence belongs to the RecR family.

May play a role in DNA repair. It seems to be involved in an RecBC-independent recombinational process of DNA repair. It may act with RecF and RecO. This is Recombination protein RecR from Synechococcus sp. (strain JA-2-3B'a(2-13)) (Cyanobacteria bacterium Yellowstone B-Prime).